The sequence spans 63 residues: Jingdongin-1-MT1 (63 aa).

Positions 1–22 are cleaved as a signal peptide; it reads MFTLKKSLLLLFFLGTINLSLC. Residues 23–44 constitute a propeptide, removed in mature form; that stretch reads EQERDADEEERRDDDEMDVEVE. C57 and C63 form a disulfide bridge.

Belongs to the frog skin active peptide (FSAP) family. Brevinin subfamily. Expressed by the skin glands.

Its subcellular location is the secreted. Its function is as follows. Antimicrobial peptide. Active against some Gram-negative and a variety of Gram-positive bacterial strains. Active against fungus C.glabrata 090902 but not against C.neoformans 201211. Shows hemolytic activity against human erythrocytes. This Amolops mantzorum (Sichuan torrent frog) protein is Jingdongin-1-MT1.